The primary structure comprises 142 residues: Hemoglobin subunit epsilon (142 aa).

Positions 3–142 (HFTAEEKAAI…KLVSAVAIAL (140 aa)) constitute a Globin domain. Residues S14 and S51 each carry the phosphoserine modification. H64 and H93 together coordinate heme b.

It belongs to the globin family. In terms of assembly, heterotetramer of two alpha chains and two epsilon chains in early embryonic hemoglobin Gower-2; two zeta chains and two epsilon chains in early embryonic hemoglobin Gower-1. In terms of tissue distribution, red blood cells.

Its function is as follows. The epsilon chain is a beta-type chain of early mammalian embryonic hemoglobin. This Callithrix geoffroyi (Geoffroy's marmoset) protein is Hemoglobin subunit epsilon (HBE1).